Reading from the N-terminus, the 468-residue chain is 3-isopropylmalate dehydratase large subunit (468 aa).

3 residues coordinate [4Fe-4S] cluster: cysteine 349, cysteine 409, and cysteine 412.

Belongs to the aconitase/IPM isomerase family. LeuC type 1 subfamily. Heterodimer of LeuC and LeuD. [4Fe-4S] cluster is required as a cofactor.

It catalyses the reaction (2R,3S)-3-isopropylmalate = (2S)-2-isopropylmalate. The protein operates within amino-acid biosynthesis; L-leucine biosynthesis; L-leucine from 3-methyl-2-oxobutanoate: step 2/4. Its function is as follows. Catalyzes the isomerization between 2-isopropylmalate and 3-isopropylmalate, via the formation of 2-isopropylmaleate. This Shewanella baltica (strain OS185) protein is 3-isopropylmalate dehydratase large subunit.